The primary structure comprises 389 residues: Inner membrane transport protein YdhP (389 aa).

The Cytoplasmic segment spans residues 1–6 (MKINYP). Residues 7–27 (LLALAIGAFGIGTTEFSPMGL) traverse the membrane as a helical segment. Topologically, residues 28 to 43 (LPVIARGVDVSIPAAG) are periplasmic. Residues 44–64 (MLISAYAVGVMVGAPLMTLLL) form a helical membrane-spanning segment. The Cytoplasmic segment spans residues 65–70 (SHRARR). Residues 71 to 91 (SALIFLMAIFTLGNVLSAIAP) traverse the membrane as a helical segment. Residues 92–100 (DYMTLMLSR) are Periplasmic-facing. Residues 101 to 121 (ILTSLNHGAFFGLGSVVAASV) traverse the membrane as a helical segment. Residues 122-130 (VPKHKQASA) are Cytoplasmic-facing. A helical transmembrane segment spans residues 131–151 (VATMFMGLTLANIGGVPAATW). The Periplasmic segment spans residues 152 to 159 (LGETIGWR). Residues 160-180 (MSFLATAGLGVISMVSLFFSL) traverse the membrane as a helical segment. Residues 181–203 (PKGGAGARPEVKKELAVLMRPQV) lie on the Cytoplasmic side of the membrane. A helical transmembrane segment spans residues 204–224 (LSALLTTVLGAGAMFTLYTYI). Residues 225-236 (SPVLQSITHATP) are Periplasmic-facing. Residues 237 to 257 (VFVTAMLVLIGVGFSIGNYLG) traverse the membrane as a helical segment. The Cytoplasmic segment spans residues 258–266 (GKLADRSVN). A helical membrane pass occupies residues 267 to 287 (GTLKGFLLLLMVIMLAIPFLA). Topologically, residues 288-290 (RNK) are periplasmic. Residues 291 to 311 (FGAAISMAVWGAATFAVVPPL) traverse the membrane as a helical segment. The Cytoplasmic portion of the chain corresponds to 312 to 330 (QMRVMRVASEAPGLSSSVN). Residues 331–351 (IGAFNLGNALGAAAGGAVISA) form a helical membrane-spanning segment. The Periplasmic portion of the chain corresponds to 352–356 (GLGYS). Residues 357–377 (FVPVMGAIVAGLALLLVFMSA) traverse the membrane as a helical segment. Topologically, residues 378-389 (RKQPETVCVANS) are cytoplasmic.

This sequence belongs to the major facilitator superfamily.

The protein resides in the cell inner membrane. The chain is Inner membrane transport protein YdhP (ydhP) from Escherichia coli O157:H7.